The sequence spans 445 residues: Phosphatidate cytidylyltransferase 2 (445 aa).

Basic and acidic residues predominate over residues 1–39 (MTELRQRVAREPEAPPEDKESESEAKADGETASDSESRV). Residues 1-52 (MTELRQRVAREPEAPPEDKESESEAKADGETASDSESRVEAVTQPPSADDTP) form a disordered region. A Phosphoserine modification is found at S21. A Phosphothreonine modification is found at T31. A phosphoserine mark is found at S33, S35, and S37. T51 carries the phosphothreonine modification. 6 helical membrane passes run 79-99 (MIAF…MIVM), 132-152 (FLLC…FFTL), 166-186 (HRFI…LSLV), 213-233 (LVIH…SCVI), 262-282 (GFIG…YVMS), and 340-360 (IALS…ASGF).

It belongs to the CDS family. In terms of assembly, homodimer.

It localises to the endoplasmic reticulum membrane. The catalysed reaction is a 1,2-diacyl-sn-glycero-3-phosphate + CTP + H(+) = a CDP-1,2-diacyl-sn-glycerol + diphosphate. It carries out the reaction 1-octadecanoyl-2-(5Z,8Z,11Z,14Z-eicosatetraenoyl)-sn-glycero-3-phosphate + CTP + H(+) = 1-octadecanoyl-2-(5Z,8Z,11Z,14Z-eicosatetraenoyl)-sn-glycero-3-cytidine-5'-diphosphate + diphosphate. It catalyses the reaction 1-octadecanoyl-2-(9Z,12Z-octadecadienoyl)-sn-glycero-3-phosphate + CTP + H(+) = 1-octadecanoyl-2-(9Z,12Z-octadecadienoyl)-sn-glycero-3-cytidine-5'-diphosphate + diphosphate. The enzyme catalyses 1-hexadecanoyl-2-(5Z,8Z,11Z,14Z-eicosatetraenoyl)-sn-glycero-3-phosphate + CTP + H(+) = 1-hexadecanoyl-2-(5Z,8Z,11Z,14Z-eicosatetraenoyl)-sn-glycero-3-cytidine-5'-diphosphate + diphosphate. The catalysed reaction is 1,2-di-(5Z,8Z,11Z,14Z)-eicosatetraenoyl-sn-glycero-3-phosphate + CTP + H(+) = 1,2-di-(5Z,8Z,11Z,14Z-eicosatetraenoyl)-sn-glycero-3-cytidine-5'-diphosphate + diphosphate. It carries out the reaction 1-octadecanoyl-2-(9Z-octadecenoyl)-sn-glycero-3-phosphate + CTP + H(+) = 1-octadecanoyl-2-(9Z-octadecenoyl)-sn-glycero-3-cytidine-5'-diphosphate + diphosphate. It catalyses the reaction 1-octadecanoyl-2-(4Z,7Z,10Z,13Z,16Z,19Z-docosahexaenoyl)-sn-glycero-3-phosphate + CTP + H(+) = 1-octadecanoyl-2-(4Z,7Z,10Z,13Z,16Z,19Z-docosahexaenoyl)-sn-glycero-3-cytidine-5'-diphosphate + diphosphate. The enzyme catalyses 1,2-di-(9Z,12Z-octadecadienoyl)-sn-glycero-3-phosphate + CTP + H(+) = 1,2-di-(9Z,12Z-octadecadienoyl)-sn-glycero-3-cytidine-5'-diphosphate + diphosphate. The catalysed reaction is 1,2-di-(9Z-octadecenoyl)-sn-glycero-3-phosphate + CTP + H(+) = 1,2-di-(9Z-octadecenoyl)-sn-glycero-3-cytidine-5'-diphosphate + diphosphate. It participates in phospholipid metabolism; CDP-diacylglycerol biosynthesis; CDP-diacylglycerol from sn-glycerol 3-phosphate: step 3/3. Its function is as follows. Catalyzes the conversion of phosphatidic acid (PA) to CDP-diacylglycerol (CDP-DAG), an essential intermediate in the synthesis of phosphatidylglycerol, cardiolipin and phosphatidylinositol. Exhibits specificity for the nature of the acyl chains at the sn-1 and sn-2 positions in the substrate, PA and the preferred acyl chain composition is 1-stearoyl-2-arachidonoyl-sn-phosphatidic acid. Plays an important role in regulating the growth and maturation of lipid droplets which are storage organelles at the center of lipid and energy homeostasis. In Bos taurus (Bovine), this protein is Phosphatidate cytidylyltransferase 2 (CDS2).